The chain runs to 428 residues: Cytochrome bc complex cytochrome b subunit (428 aa).

Composition is skewed to low complexity over residues 1 to 15 (MAEN…TAPA) and 21 to 52 (APGA…AAAP). The tract at residues 1-72 (MAENTPKPAA…RPDPNPFKDS (72 aa)) is disordered. The segment covering 59-72 (PPVDRPDPNPFKDS) has biased composition (basic and acidic residues). Residues 110–130 (YFGGLGLFFFVIQILTGLLLL) form a helical membrane-spanning segment. 2 residues coordinate heme b: His-161 and His-175. The next 6 membrane-spanning stretches (helical) occupy residues 162-182 (AWSA…TFFM), 193-213 (WVSG…GYLL), 260-280 (LHVV…LTLV), 312-331 (GIGW…MFPW), 369-389 (ELLA…VPFI), and 401-421 (IFTI…YRVY). Positions 261 and 276 each coordinate heme b.

Belongs to the cytochrome b family. It depends on heme b as a cofactor.

The protein resides in the cell inner membrane. Functionally, component of the green S-bacteria bc complex, which consists of the Rieske protein and cytochrome b subunit but appears to lack a cytochrome c1-equivalent. This complex has a comparatively low redox potential. The protein is Cytochrome bc complex cytochrome b subunit (petB) of Chlorobaculum thiosulfatiphilum (Chlorobium limicola f.sp. thiosulfatophilum).